Here is a 218-residue protein sequence, read N- to C-terminus: Capsid protein (218 aa).

Met-1 is modified (N-acetylmethionine; by host). A disordered region spans residues 1 to 28 (MDKSESTSAGRNRRRRPRRGSRSAPSSA). The segment covering 11–21 (RNRRRRPRRGS) has biased composition (basic residues).

This sequence belongs to the cucumovirus capsid protein family.

Its subcellular location is the virion. Its function is as follows. Capsid protein. Probably binds RNA and plays a role in packaging. The protein is Capsid protein of Cucumis sativus (Cucumber).